The primary structure comprises 460 residues: MVAVTGGRPPGLQDAPGAPPPAPAAEAVPSRPLARDATYGGRVYGGVGGGGCCLEFLDCVLRAMGVATPAEIMPPADFRWAARPMRRRRRGGSSSSSSSPRDREPRDGRIAANGASAAASLYTMRGNKGVNQDAMLVWENFCSKEDTIFCGVFDGHGPYGHLVSKRVRDLLPIKLSANLGRDGHKETSTNIVTSSMTEGGGTERMDRDTETPLGTEENGDYPEMFAALRTSLLRAFYVMDRDLKFHKTIDSVFSGTTAVTVIKQGHDLLIGNLGDSRAVLGTRDEYDQFFAVQLTVDLKPTIPSEAARIRERSGRIFSLPDEPDVARVWLPKYNMPGLAMARAFGDFCLKDYGLISMPDVSYHRITEKDEFVVLATDGVWDVLSNSEVVSIVSQAKSEASAARFVVESAQRAWRTRFPTSKIDDCAVVCLFLNTDARNKPPGSGIKDLANAIELGGGNLS.

Disordered regions lie at residues 1–30 (MVAV…AVPS) and 83–111 (RPMR…GRIA). Positions 100-109 (PRDREPRDGR) are enriched in basic and acidic residues. The PPM-type phosphatase domain occupies 118–432 (AASLYTMRGN…DDCAVVCLFL (315 aa)). Mn(2+)-binding residues include Asp154 and Gly155. Positions 192 to 219 (VTSSMTEGGGTERMDRDTETPLGTEENG) are disordered. The segment covering 201–210 (GTERMDRDTE) has biased composition (basic and acidic residues). Residues Asp377 and Asp423 each coordinate Mn(2+).

Belongs to the PP2C family. Mg(2+) serves as cofactor. The cofactor is Mn(2+).

It catalyses the reaction O-phospho-L-seryl-[protein] + H2O = L-seryl-[protein] + phosphate. The enzyme catalyses O-phospho-L-threonyl-[protein] + H2O = L-threonyl-[protein] + phosphate. The protein is Probable protein phosphatase 2C 38 of Oryza sativa subsp. japonica (Rice).